The following is a 180-amino-acid chain: Mitochondrial membrane protein FMP33 (180 aa).

The next 3 helical transmembrane spans lie at 34 to 54 (LYTSLLVTTLYGTGLACLYLE), 121 to 141 (FSIVWGFLIQLSSLIGNSTLG), and 145 to 165 (ILYKGSVVSVLGFPPLIYMAL).

It is found in the mitochondrion membrane. The polypeptide is Mitochondrial membrane protein FMP33 (FMP33) (Saccharomyces cerevisiae (strain ATCC 204508 / S288c) (Baker's yeast)).